The chain runs to 132 residues: uncharacterized protein (132 aa).

A helical transmembrane segment spans residues 105–125; that stretch reads VHGYVVFWLSILCILIIIFVY.

It is found in the membrane. This is an uncharacterized protein from Methanocaldococcus jannaschii (strain ATCC 43067 / DSM 2661 / JAL-1 / JCM 10045 / NBRC 100440) (Methanococcus jannaschii).